Here is a 478-residue protein sequence, read N- to C-terminus: uncharacterized protein (478 aa).

A signal peptide spans 1 to 19 (MKLFPLCLSALVMSTATCA). Topologically, residues 20 to 214 (SSVEGAIEKV…VPVTLKLQRQ (195 aa)) are lumenal. Residues 215–235 (IFLSFSIVYGLISLWWAIRCI) form a helical membrane-spanning segment. The Cytoplasmic portion of the chain corresponds to 236–240 (CSRTK). A helical membrane pass occupies residues 241 to 261 (LHLVQVCLFCWFSFFILNHPV). Residues 262–289 (KQRIFSIDNPDEYLVPFVVSCFTYFLGD) are Lumenal-facing. The chain crosses the membrane as a helical span at residues 290–310 (GIEYALYSLFITTTVLGFGTI). At 311 to 317 (RRTSKKM) the chain is on the cytoplasmic side. Residues 318-338 (VLFFSLLTCGQAFLVNVAPMV) form a helical membrane-spanning segment. Topologically, residues 339-356 (YPLLYISGSDKACVLRMV) are lumenal. The helical transmembrane segment at 357 to 377 (WVFNKFLYLPLITFLGAVLAF) threads the bilayer. The Cytoplasmic segment spans residues 378–391 (RFRLKKASQFDTRW). The helical transmembrane segment at 392-412 (NLFALTLAIIILFAFNDLVIF) threads the bilayer. Over 413–427 (DKLQKLWKYDDTTLE) the chain is Lumenal. Residues 428-448 (YLKIVNGGIKFVAFSILLGPY) traverse the membrane as a helical segment. Residues 449-478 (SKLFAEPKSLQLDDFLGKHDGHKDPSLEKF) are Cytoplasmic-facing.

The protein resides in the endoplasmic reticulum membrane. The protein localises to the golgi apparatus membrane. This is an uncharacterized protein from Schizosaccharomyces pombe (strain 972 / ATCC 24843) (Fission yeast).